We begin with the raw amino-acid sequence, 279 residues long: Putative phosphoenolpyruvate synthase regulatory protein (279 aa).

Residue 159–166 (GVSRSGKT) participates in ADP binding.

It belongs to the pyruvate, phosphate/water dikinase regulatory protein family. PSRP subfamily.

The enzyme catalyses [pyruvate, water dikinase] + ADP = [pyruvate, water dikinase]-phosphate + AMP + H(+). It carries out the reaction [pyruvate, water dikinase]-phosphate + phosphate + H(+) = [pyruvate, water dikinase] + diphosphate. Functionally, bifunctional serine/threonine kinase and phosphorylase involved in the regulation of the phosphoenolpyruvate synthase (PEPS) by catalyzing its phosphorylation/dephosphorylation. The sequence is that of Putative phosphoenolpyruvate synthase regulatory protein from Ralstonia nicotianae (strain ATCC BAA-1114 / GMI1000) (Ralstonia solanacearum).